The chain runs to 195 residues: dTTP/UTP pyrophosphatase (195 aa).

Aspartate 73 serves as the catalytic Proton acceptor.

It belongs to the Maf family. YhdE subfamily. The cofactor is a divalent metal cation.

The protein resides in the cytoplasm. It carries out the reaction dTTP + H2O = dTMP + diphosphate + H(+). The catalysed reaction is UTP + H2O = UMP + diphosphate + H(+). Its function is as follows. Nucleoside triphosphate pyrophosphatase that hydrolyzes dTTP and UTP. May have a dual role in cell division arrest and in preventing the incorporation of modified nucleotides into cellular nucleic acids. In Deinococcus radiodurans (strain ATCC 13939 / DSM 20539 / JCM 16871 / CCUG 27074 / LMG 4051 / NBRC 15346 / NCIMB 9279 / VKM B-1422 / R1), this protein is dTTP/UTP pyrophosphatase.